A 121-amino-acid chain; its full sequence is Perlustrin-like protein (121 aa).

Residues 1-23 (MKFGVGFLLSCLVALNTVQNMLA) form the signal peptide. Positions 24 to 104 (LSCLPCDFDT…FDFKGTCQES (81 aa)) constitute an IGFBP N-terminal domain. Intrachain disulfides connect Cys-26/Cys-52, Cys-29/Cys-54, Cys-36/Cys-55, Cys-45/Cys-58, Cys-66/Cys-79, and Cys-73/Cys-101. Asn-68, Asn-81, and Asn-117 each carry an N-linked (GlcNAc...) asparagine glycan.

As to expression, component of the acid-insoluble organic matrix of calcified layers of the shell (at protein level).

The protein resides in the secreted. This chain is Perlustrin-like protein, found in Lottia gigantea (Giant owl limpet).